The following is a 114-amino-acid chain: UPF0757 protein YmgG (114 aa).

It belongs to the UPF0757 family.

This chain is UPF0757 protein YmgG, found in Escherichia fergusonii (strain ATCC 35469 / DSM 13698 / CCUG 18766 / IAM 14443 / JCM 21226 / LMG 7866 / NBRC 102419 / NCTC 12128 / CDC 0568-73).